The primary structure comprises 250 residues: MWTGVNMDSSKRQFLQQLGVLTAGASLVPLAEAKFPFSPERHEGSPRHRYAMLIDLRRCIGCQSCTVSCTIENQTPQGAFRTTVNQYQVQREGSQEVTNVLLPRLCNHCDNPPCVPVCPVQATFQREDGIVVVDNKRCVGCAYCVQACPYDARFINHETQTADKCTFCVHRLEAGLLPACVESCVGGARIIGDIKDPHSRIATMLHQHRDAIKVLKPENGTSPHVFYLGLDDAFVTPLMGRAQPALWQEV.

The segment at residues 1-33 (MWTGVNMDSSKRQFLQQLGVLTAGASLVPLAEA) is a signal peptide (tat-type signal). 3 4Fe-4S ferredoxin-type domains span residues 50–79 (YAML…PQGA), 97–128 (VTNV…QRED), and 129–158 (GIVV…INHE). Positions 59, 62, 65, 69, 106, 109, 114, 118, 138, 141, 144, 148, 165, 168, 180, and 184 each coordinate [4Fe-4S] cluster.

In terms of assembly, probably composed of three subunits: TtrA, TtrB and TtrC. In terms of processing, predicted to be exported by the Tat system. The position of the signal peptide cleavage has not been experimentally proven.

The protein localises to the periplasm. It is found in the cell inner membrane. Part of a membrane-bound tetrathionate reductase that catalyzes the reduction of tetrathionate to thiosulfate. TtrB is probably involved in transfer of electrons from TtrC to TtrA. During mice infection, the ability to use tetrathionate as an electron acceptor is a growth advantage for S.typhimurium over the competing microbiota in the lumen of the inflamed gut. The sequence is that of Tetrathionate reductase subunit B (ttrB) from Salmonella typhimurium (strain LT2 / SGSC1412 / ATCC 700720).